Reading from the N-terminus, the 242-residue chain is ATP synthase subunit b (242 aa).

2 helical membrane-spanning segments follow: residues 8 to 28 (VLPFLLVLLFAFAPLALASAP) and 87 to 107 (LMDLFWRVLNFAVLMAILIKF).

Belongs to the ATPase B chain family. In terms of assembly, F-type ATPases have 2 components, F(1) - the catalytic core - and F(0) - the membrane proton channel. F(1) has five subunits: alpha(3), beta(3), gamma(1), delta(1), epsilon(1). F(0) has three main subunits: a(1), b(2) and c(10-14). The alpha and beta chains form an alternating ring which encloses part of the gamma chain. F(1) is attached to F(0) by a central stalk formed by the gamma and epsilon chains, while a peripheral stalk is formed by the delta and b chains.

The protein localises to the cell inner membrane. F(1)F(0) ATP synthase produces ATP from ADP in the presence of a proton or sodium gradient. F-type ATPases consist of two structural domains, F(1) containing the extramembraneous catalytic core and F(0) containing the membrane proton channel, linked together by a central stalk and a peripheral stalk. During catalysis, ATP synthesis in the catalytic domain of F(1) is coupled via a rotary mechanism of the central stalk subunits to proton translocation. Its function is as follows. Component of the F(0) channel, it forms part of the peripheral stalk, linking F(1) to F(0). This chain is ATP synthase subunit b, found in Desulfotalea psychrophila (strain LSv54 / DSM 12343).